We begin with the raw amino-acid sequence, 475 residues long: MEIOTIC F-BOX protein MOF (475 aa).

Residues 1 to 58 (MRRERDATQIPENPMEGIPQTAAAAAAAAAAEASEPPRKRARVDGGGGGAGEEEEDRL) form a disordered region. Residues 22-33 (AAAAAAAAAAEA) are compositionally biased toward low complexity. An F-box domain is found at 55–91 (EDRLSDLPDCLLEDILAHLGSRQAVQTSVLSRRWRNL).

It belongs to the F-box protein family. FBX subfamily. As to quaternary structure, part of a SCF (SKP1-CUL1-F-box protein) E3 ubiquitin-protein ligase complex. Interacts (via F-box domain) directly with SKP1. Highly expressed in the stem, leaf and in the anther during meiosis. Weakly expressed in roots and lemma/palea.

It is found in the nucleus. The protein resides in the chromosome. It participates in protein modification; protein ubiquitination. Its function is as follows. Probable component of a SCF (SKP1-CULLIN-F-box protein) E3 ubiquitin-protein ligase complex and may function through the ubiquitin-mediated protein degradation or signaling pathway. Required for male meiotic prophase I progression. Required for telomere bouquet formation, homologous chromosome pairing and for the formation of the synaptonemal complex (SC), which stabilizes initial chromosomal axial associations and promotes crossover formation. Involved in meiotic DNA double-strand break (DSB) end-processing and repair, and is important in the recruitment of DSB repair proteins to the DSB sites. The chain is MEIOTIC F-BOX protein MOF from Oryza sativa subsp. japonica (Rice).